The sequence spans 744 residues: Prestin (744 aa).

At 1–75 the chain is on the cytoplasmic side; it reads MDHAEENEIP…PITKWLPAYK (75 aa). Residues 76–105 form a helical membrane-spanning segment; it reads FKEYVLGDLVSGISTGVLQLPQGLAFAMLA. Over 106 to 108 the chain is Extracellular; it reads AVP. Residues 109-126 form a helical membrane-spanning segment; that stretch reads PVFGLYSSFYPVIMYCFF. At 127–137 the chain is on the cytoplasmic side; sequence GTSRHISIGPF. Residues 138–151 traverse the membrane as a helical segment; sequence AVISLMIGGVAVRL. At 152 to 168 the chain is on the extracellular side; it reads VPDDIVIPGGVNATNGT. The short motif at 158 to 168 is the Involved in motor function element; it reads IPGGVNATNGT. N-linked (GlcNAc...) asparagine glycosylation is found at asparagine 163 and asparagine 166. Residues 169 to 196 form a helical membrane-spanning segment; that stretch reads EARDALRVKVAMSVTLLSGIIQFCLGVC. The Cytoplasmic portion of the chain corresponds to 197–206; that stretch reads RFGFVAIYLT. A helical transmembrane segment spans residues 207-230; sequence EPLVRGFTTAAAVHVFTSMLKYLF. The Extracellular segment spans residues 231–241; sequence GVKTKRYSGIF. An intramembrane region (helical) is located at residues 242–253; that stretch reads SVVYSTVAVLQN. Topologically, residues 254 to 258 are extracellular; that stretch reads VKNLN. The chain crosses the membrane as a helical span at residues 259–282; that stretch reads VCSLGVGLMVFGLLLGGKEFNERF. Residues 283 to 291 are Cytoplasmic-facing; that stretch reads KEKLPAPIP. Residues 292–307 traverse the membrane as a helical segment; the sequence is LEFFAVVMGTGISAGF. The Extracellular portion of the chain corresponds to 308 to 332; that stretch reads NLHESYSVDVVGTLPLGLLPPANPD. Residues 333 to 367 form a helical membrane-spanning segment; the sequence is TSLFHLVYVDAIAIAIVGFSVTISMAKTLANKHGY. At 368-370 the chain is on the cytoplasmic side; it reads QVD. Residues 371-388 form a helical membrane-spanning segment; it reads GNQELIALGICNSIGSLF. Residues 389–396 lie on the Extracellular side of the membrane; sequence QTFSISCS. A helical membrane pass occupies residues 397-406; it reads LSRSLVQEGT. Serine 398 is a binding site for salicylate. At 407-410 the chain is on the cytoplasmic side; the sequence is GGKT. A helical membrane pass occupies residues 411-432; that stretch reads QLAGCLASLMILLVILATGFLF. Residues 433–436 lie on the Extracellular side of the membrane; it reads ESLP. A helical transmembrane segment spans residues 437-464; the sequence is QAVLSAIVIVNLKGMFMQFSDLPFFWRT. A topological domain (cytoplasmic) is located at residue serine 465. A helical transmembrane segment spans residues 466-481; it reads KIELTIWLTTFVSSLF. Residues 482–483 are Extracellular-facing; the sequence is LG. Residues 484–504 form a helical membrane-spanning segment; it reads LDYGLITAVIIALLTVIYRTQ. Positions 505-718 are extended region for STAS domain; that stretch reads SPSYKVLGQL…AVLGSQVREA (214 aa). Topologically, residues 505–744 are cytoplasmic; that stretch reads SPSYKVLGQL…PNATPTTPEA (240 aa). The STAS domain occupies 525–713; it reads AYEEVKEIPG…HSIHDAVLGS (189 aa). A disordered region spans residues 720–744; the sequence is AEQEATASLPQEDMEPNATPTTPEA.

Belongs to the SLC26A/SulP transporter (TC 2.A.53) family. In terms of assembly, homodimer. Interacts (via STAS domain) with CALM; this interaction is calcium-dependent and the STAS domain interacts with only one lobe of CALM which is an elongated conformation. Interacts with MYH1. Expressed in the outer hair cells (OHC) of the organ of Corti of the inner ear. Also weak expression in brain and testis. Very weakly expressed in heart, spleen, muscle and lactating mammary glands. Expressed in cardiac myocytes (at protein level), both in the surface sarcolemma and along the t-tubule. Weakly expressed in skeletal muscle cells (at protein level).

It localises to the lateral cell membrane. The catalysed reaction is 2 hydrogencarbonate(in) + chloride(out) = 2 hydrogencarbonate(out) + chloride(in). Its function is as follows. Voltage-sensitive motor protein that drives outer hair cell (OHC) electromotility (eM) and participates in sound amplification in the hearing organ. Converts changes in the transmembrane electric potential into mechanical displacements resulting in the coupling of its expansion to movement of a charged voltage sensor across the lipid membrane. The nature of the voltage sensor is not completely clear, and two models compete. In the first model, acts as an incomplete transporter where intracellular chloride anion acts as extrinsic voltage sensor that drives conformational change in the protein which is sufficient to produce a length change in the plane of the membrane and hence in the length of the OHC. The second model in which multiple charged amino acid residues are distributed at the intracellular and extracellular membrane interfaces that form an intrinsic voltage sensor, whose movement produces the non-linear capacitance (NLC). However, the effective voltage sensor may be the result of a hybrid voltage sensor, assembled from intrinsic charge (charged residues) and extrinsic charge (bound anion). Notably, binding of anions to the anion-binding pocket partially neutralizes the intrinsic positive charge rather than to form an electrically negative sensor, therefore remaining charge may serve as voltage sensor that, after depolarization, moves from down (expanded state) to up (contracted) conformation, which is accompanied by an eccentric contraction of the intermembrane cross-sectional area of the protein as well as a major increase in the hydrophobic thickness of the protein having as consequences the plasma membrane thickening and the cell contraction after membrane depolarization. The anion-binding pocket transits from the inward-open (Down) state, where it is exposed toward the intracellular solvent in the absence of anion, to the occluded (Up) state upon anion binding. Salicylate competes for the anion-binding site and inhibits the voltage-sensor movement, and therefore inhibits the charge transfer and electromotility by displacing Cl(-) from the anion-binding site and by preventing the structural transitions to the contracted state. In addition, can act as a weak Cl(-)/HCO3(-) antiporter across the cell membrane and so regulate the intracellular pH of the outer hair cells (OHCs), while firstly found as being unable to mediate electrogenic anion transport. Moreover, supports a role in cardiac mechanical amplification serving as an elastic element to enhance the actomyosin- based sarcomere contraction system. The polypeptide is Prestin (Mus musculus (Mouse)).